A 267-amino-acid polypeptide reads, in one-letter code: Multivesicular body subunit 12A (267 aa).

Residues 7-146 (AAPLSGVGWA…SFAIWCKKGA (140 aa)) form the MABP domain. The short motif at 154 to 159 (PVPKPR) is the SH3-binding element. In terms of domain architecture, UMA spans 210 to 259 (MDGVPFTLHPKFERSPKSDSSAILTDLTVKSLADIEKEYNYTFVVERTAA).

Belongs to the MVB12 family. Component of the ESCRT-I complex (endosomal sorting complex required for transport I).

It localises to the cytoplasm. It is found in the endosome. The protein resides in the late endosome membrane. Component of the ESCRT-I complex, a regulator of vesicular trafficking process. Required for the sorting of endocytic ubiquitinated cargos into multivesicular bodies. The sequence is that of Multivesicular body subunit 12A (MVB12A) from Gallus gallus (Chicken).